A 31-amino-acid chain; its full sequence is MLTLTSYFGFLLAALTITLALFIGLNKIRLI.

Residues 4-24 (LTSYFGFLLAALTITLALFIG) traverse the membrane as a helical segment.

This sequence belongs to the PetL family. In terms of assembly, the 4 large subunits of the cytochrome b6-f complex are cytochrome b6, subunit IV (17 kDa polypeptide, PetD), cytochrome f and the Rieske protein, while the 4 small subunits are PetG, PetL, PetM and PetN. The complex functions as a dimer.

It is found in the plastid. Its subcellular location is the chloroplast thylakoid membrane. Component of the cytochrome b6-f complex, which mediates electron transfer between photosystem II (PSII) and photosystem I (PSI), cyclic electron flow around PSI, and state transitions. PetL is important for photoautotrophic growth as well as for electron transfer efficiency and stability of the cytochrome b6-f complex. This is Cytochrome b6-f complex subunit 6 from Triticum aestivum (Wheat).